Reading from the N-terminus, the 273-residue chain is Ethanolamine ammonia-lyase small subunit (273 aa).

Residues Val-164, Glu-185, and Cys-214 each coordinate adenosylcob(III)alamin.

The protein belongs to the EutC family. The basic unit is a heterodimer which dimerizes to form tetramers. The heterotetramers trimerize; 6 large subunits form a core ring with 6 small subunits projecting outwards. Requires adenosylcob(III)alamin as cofactor.

It localises to the bacterial microcompartment. The enzyme catalyses ethanolamine = acetaldehyde + NH4(+). The protein operates within amine and polyamine degradation; ethanolamine degradation. Catalyzes the deamination of various vicinal amino-alcohols to oxo compounds. Allows this organism to utilize ethanolamine as the sole source of nitrogen and carbon in the presence of external vitamin B12. This Pseudomonas aeruginosa (strain LESB58) protein is Ethanolamine ammonia-lyase small subunit.